We begin with the raw amino-acid sequence, 459 residues long: Bifunctional protein GlmU (459 aa).

Positions 1–228 are pyrophosphorylase; that stretch reads MNFKAIILAA…IEELMGVNSR (228 aa). Residues 8-11, K22, Q72, and 77-78 each bind UDP-N-acetyl-alpha-D-glucosamine; these read LAAG and GT. D101 contributes to the Mg(2+) binding site. UDP-N-acetyl-alpha-D-glucosamine-binding residues include G138, E153, N168, and N226. A Mg(2+)-binding site is contributed by N226. Residues 229-249 are linker; that stretch reads VELSKAEEIMRRRINESHMVN. The N-acetyltransferase stretch occupies residues 250-459; sequence GVTIIDTNST…KKNQKDDQSK (210 aa). The UDP-N-acetyl-alpha-D-glucosamine site is built by R331 and K349. H361 (proton acceptor) is an active-site residue. Positions 364 and 375 each coordinate UDP-N-acetyl-alpha-D-glucosamine. Acetyl-CoA contacts are provided by residues 384-385, S403, T421, and R438; that span reads NY.

In the N-terminal section; belongs to the N-acetylglucosamine-1-phosphate uridyltransferase family. The protein in the C-terminal section; belongs to the transferase hexapeptide repeat family. In terms of assembly, homotrimer. Mg(2+) serves as cofactor.

The protein localises to the cytoplasm. It carries out the reaction alpha-D-glucosamine 1-phosphate + acetyl-CoA = N-acetyl-alpha-D-glucosamine 1-phosphate + CoA + H(+). The enzyme catalyses N-acetyl-alpha-D-glucosamine 1-phosphate + UTP + H(+) = UDP-N-acetyl-alpha-D-glucosamine + diphosphate. Its pathway is nucleotide-sugar biosynthesis; UDP-N-acetyl-alpha-D-glucosamine biosynthesis; N-acetyl-alpha-D-glucosamine 1-phosphate from alpha-D-glucosamine 6-phosphate (route II): step 2/2. It functions in the pathway nucleotide-sugar biosynthesis; UDP-N-acetyl-alpha-D-glucosamine biosynthesis; UDP-N-acetyl-alpha-D-glucosamine from N-acetyl-alpha-D-glucosamine 1-phosphate: step 1/1. The protein operates within bacterial outer membrane biogenesis; LPS lipid A biosynthesis. Its function is as follows. Catalyzes the last two sequential reactions in the de novo biosynthetic pathway for UDP-N-acetylglucosamine (UDP-GlcNAc). The C-terminal domain catalyzes the transfer of acetyl group from acetyl coenzyme A to glucosamine-1-phosphate (GlcN-1-P) to produce N-acetylglucosamine-1-phosphate (GlcNAc-1-P), which is converted into UDP-GlcNAc by the transfer of uridine 5-monophosphate (from uridine 5-triphosphate), a reaction catalyzed by the N-terminal domain. In Clostridioides difficile (strain 630) (Peptoclostridium difficile), this protein is Bifunctional protein GlmU.